A 551-amino-acid polypeptide reads, in one-letter code: Peptidyl-prolyl cis-trans isomerase-like 4 (551 aa).

One can recognise a PPIase cyclophilin-type domain in the interval Met-1–Val-185. The tract at residues Gly-54–Ser-88 is disordered. The span at Ile-66–Ser-88 shows a compositional bias: polar residues. The RRM domain maps to Asn-262–Ser-340. Positions Arg-352–Arg-551 are disordered. 2 stretches are compositionally biased toward basic and acidic residues: residues Lys-384–Pro-397 and Ser-408–Asp-454. Basic residues predominate over residues His-455–Val-464. Residues Arg-465–Arg-551 show a composition bias toward basic and acidic residues.

Belongs to the cyclophilin-type PPIase family. PPIL4 subfamily.

The protein resides in the nucleus. The catalysed reaction is [protein]-peptidylproline (omega=180) = [protein]-peptidylproline (omega=0). In terms of biological role, PPIases accelerate the folding of proteins. It catalyzes the cis-trans isomerization of proline imidic peptide bonds in oligopeptides. This is Peptidyl-prolyl cis-trans isomerase-like 4 (CYP6) from Mycosarcoma maydis (Corn smut fungus).